Consider the following 431-residue polypeptide: Na(+)-translocating NADH-quinone reductase subunit F (431 aa).

A helical transmembrane segment spans residues 9-29 (FICIASLIFCAIGVILAGVIL). In terms of domain architecture, 2Fe-2S ferredoxin-type spans 39–133 (HPCKLKINDN…DMSLEIEERY (95 aa)). Positions 76, 82, 85, and 117 each coordinate [2Fe-2S] cluster. Residues 136–286 (ASSWEGTVIS…SGPYGESFMK (151 aa)) form the FAD-binding FR-type domain. The segment at 289–413 (DRPLIFLIGG…PLHNSSILKL (125 aa)) is catalytic.

This sequence belongs to the NqrF family. Composed of six subunits; NqrA, NqrB, NqrC, NqrD, NqrE and NqrF. [2Fe-2S] cluster is required as a cofactor. It depends on FAD as a cofactor.

Its subcellular location is the cell inner membrane. It carries out the reaction a ubiquinone + n Na(+)(in) + NADH + H(+) = a ubiquinol + n Na(+)(out) + NAD(+). Its function is as follows. NQR complex catalyzes the reduction of ubiquinone-1 to ubiquinol by two successive reactions, coupled with the transport of Na(+) ions from the cytoplasm to the periplasm. The first step is catalyzed by NqrF, which accepts electrons from NADH and reduces ubiquinone-1 to ubisemiquinone by a one-electron transfer pathway. The polypeptide is Na(+)-translocating NADH-quinone reductase subunit F (Chlamydia pneumoniae (Chlamydophila pneumoniae)).